The primary structure comprises 187 residues: Small ribosomal subunit protein uS5 (187 aa).

The S5 DRBM domain maps to 20–83 (FADRLVAINR…EQAKRQMIRV (64 aa)). The interval 155 to 187 (KKEQSPRSVAQRRGKKVADILPKRDEAPAEAEA) is disordered. Over residues 170–181 (KVADILPKRDEA) the composition is skewed to basic and acidic residues.

This sequence belongs to the universal ribosomal protein uS5 family. In terms of assembly, part of the 30S ribosomal subunit. Contacts proteins S4 and S8.

With S4 and S12 plays an important role in translational accuracy. In terms of biological role, located at the back of the 30S subunit body where it stabilizes the conformation of the head with respect to the body. The sequence is that of Small ribosomal subunit protein uS5 from Ruegeria sp. (strain TM1040) (Silicibacter sp.).